Reading from the N-terminus, the 233-residue chain is MKIIFFLCSFLFFIINTQCVTHESYQELVKKLEALEDAVLTGYSLFQKEKMVLNEGTSGTAVTTSTPGSKGSVASGGSGGSVASGGSVASGGSGNSRRTNPSDNSSDSDAKSYADLKHRVRNYLLTIKELKYPQLFDLTNHMLTLCDNIHGFKYLIDGYEEINELLYKLNFYFDLLRAKLNDVCANDYCQIPFNLKIRANELDVLKKLVFGYRKPLDNIKDNVGKMEDYIKKK.

The signal sequence occupies residues 1 to 19 (MKIIFFLCSFLFFIINTQC). Positions 58–67 (SGTAVTTSTP) are enriched in polar residues. A disordered region spans residues 58 to 110 (SGTAVTTSTPGSKGSVASGGSGGSVASGGSVASGGSGNSRRTNPSDNSSDSDA). The segment covering 74–94 (ASGGSGGSVASGGSVASGGSG) has biased composition (gly residues). The segment covering 95 to 107 (NSRRTNPSDNSSD) has biased composition (polar residues). Asn104 carries N-linked (GlcNAc...) asparagine glycosylation.

In terms of assembly, forms a complex composed of subunits p83, p30, p38, and p42 which remain non-covalently associated; the complex is formed at the merozoite surface prior to egress from host erythrocytes. Forms a complex composed of processed MSP1 subunits, MSP6 subunit p36 and MSP7; the complex is formed at the merozoite surface prior to egress from host erythrocytes. Within the complex, interacts (via subunit p38) with MSP6 subunit p36 and (via subunits p83, p30 and p38) with MSP7 (via subunit p22). Forms a complex composed of MSP1, MSP6, DBLMSP1 and DBLMSP2. Within the complex, interacts (via subunit p38) with DBLMSP1 and DBLMSP2. Forms a complex composed of MSP1, and rhoptry proteins RhopH3, RAP1 and CLAG9/RhopH3. Within the complex, interacts (via subunits p42 and p19) with RhopH3 (via C-terminus). Forms a complex composed of MSP1, MSP6, MSP7, MSP9 and MSP3; within the complex, MSP6 and MSP9 mediate the binding to the host erythrocyte. Interacts (via subunits p19 and p42) with MSP9; the interaction is direct; MSP1 subunits p19 or p42, and MSP9 form a co-ligand complex that interacts with host SLC4A1/Band 3 protein. May interact with PFD6. Interacts with host spectrin. The p190 precursor is cleaved by SUB1 prior to merozoite egress into 4 subunits p83, p30, p38, and p42 which remain non-covalently associated. SUB1-mediated proteolytic cleavage occurs in an orderly manner; the first cleavage occurs at the p83/p30 site, followed by cleavage at the p30/p38 site, the last cleavage occurs at the p38/p42 site. The order of cleavage is essential for parasite viability. SUB1-mediated processing is essential for merozoite egress. In a second processing step during erythrocyte invasion, p42 is cleaved by SUB2 into p33 and p19; the latter remains attached to the merozoite surface via its GPI-anchor and stays on the surface during the subsequent ring stage.

It is found in the cell membrane. The protein localises to the secreted. Functionally, during the asexual blood stage, involved in merozoite egress from host erythrocytes possibly via its interaction with the host cytoskeleton protein spectrin resulting in the destabilization of the host cytoskeleton and thus leading to erythrocyte cell membrane rupture. Involved in the binding to host erythrocytes and is required for host erythrocyte invasion. This is Merozoite surface protein 1 from Plasmodium falciparum (isolate CDC / Honduras).